The chain runs to 195 residues: Holliday junction branch migration complex subunit RuvA (195 aa).

The interval 1–63 is domain I; the sequence is MIASVRGEVL…EDSQTLYGFA (63 aa). The interval 64-138 is domain II; sequence DSDARDLFLT…DKVGSSTSSG (75 aa). Positions 138-142 are flexible linker; it reads GVAAA. The interval 143 to 195 is domain III; that stretch reads GGHGIRGPVVEALVGLGFAVKQAEEATDKVLANDPEATTSSALRAALSMLGKK.

This sequence belongs to the RuvA family. As to quaternary structure, homotetramer. Forms an RuvA(8)-RuvB(12)-Holliday junction (HJ) complex. HJ DNA is sandwiched between 2 RuvA tetramers; dsDNA enters through RuvA and exits via RuvB. An RuvB hexamer assembles on each DNA strand where it exits the tetramer. Each RuvB hexamer is contacted by two RuvA subunits (via domain III) on 2 adjacent RuvB subunits; this complex drives branch migration. In the full resolvosome a probable DNA-RuvA(4)-RuvB(12)-RuvC(2) complex forms which resolves the HJ.

The protein resides in the cytoplasm. Functionally, the RuvA-RuvB-RuvC complex processes Holliday junction (HJ) DNA during genetic recombination and DNA repair, while the RuvA-RuvB complex plays an important role in the rescue of blocked DNA replication forks via replication fork reversal (RFR). RuvA specifically binds to HJ cruciform DNA, conferring on it an open structure. The RuvB hexamer acts as an ATP-dependent pump, pulling dsDNA into and through the RuvAB complex. HJ branch migration allows RuvC to scan DNA until it finds its consensus sequence, where it cleaves and resolves the cruciform DNA. The polypeptide is Holliday junction branch migration complex subunit RuvA (Mycolicibacterium gilvum (strain PYR-GCK) (Mycobacterium gilvum (strain PYR-GCK))).